Consider the following 242-residue polypeptide: UPF0246 protein SPN23F15130 (242 aa).

It belongs to the UPF0246 family.

The sequence is that of UPF0246 protein SPN23F15130 from Streptococcus pneumoniae (strain ATCC 700669 / Spain 23F-1).